A 205-amino-acid polypeptide reads, in one-letter code: Inactive ribonuclease-like protein 9 (205 aa).

Residues 1–26 (MMRTLITIHPLPLLLLLQQLLQPVQF) form the signal peptide. 3 disulfide bridges follow: cysteine 98/cysteine 153, cysteine 116/cysteine 168, and cysteine 123/cysteine 130. N-linked (GlcNAc...) asparagine glycans are attached at residues asparagine 131 and asparagine 143.

It belongs to the pancreatic ribonuclease family.

Its subcellular location is the secreted. Does not exhibit any ribonuclease activity. In Gorilla gorilla gorilla (Western lowland gorilla), this protein is Inactive ribonuclease-like protein 9 (RNASE9).